A 429-amino-acid polypeptide reads, in one-letter code: Hydrogenobyrinate a,c-diamide synthase (429 aa).

The 190-residue stretch at 240-429 folds into the GATase cobBQ-type domain; it reads RTAVARDVAF…SFMHLIDFSE (190 aa). The active-site Nucleophile is the C323.

Belongs to the CobB/CbiA family. Mg(2+) serves as cofactor.

The catalysed reaction is hydrogenobyrinate + 2 L-glutamine + 2 ATP + 2 H2O = hydrogenobyrinate a,c-diamide + 2 L-glutamate + 2 ADP + 2 phosphate + 2 H(+). It functions in the pathway cofactor biosynthesis; adenosylcobalamin biosynthesis; cob(II)yrinate a,c-diamide from precorrin-2 (aerobic route): step 9/10. Catalyzes the ATP-dependent amidation of the two carboxylate groups at positions a and c of hydrogenobyrinate, using either L-glutamine or ammonia as the nitrogen source. The chain is Hydrogenobyrinate a,c-diamide synthase from Rhizobium meliloti (strain 1021) (Ensifer meliloti).